The sequence spans 399 residues: MNIHEHQAKAVLKSFGAPVAEGVAIFSADEAAAAADQLPGPLWVVKSQIHAGGRGKGKFKELGSDAKGGVRLAFSKEDVVKNAKEMLGNTLVTHQTGPEGKRVNRLYIEDGADIATELYCSLLVNRETGQVAFVVSTEGGMDIEEVAAETPEKIQTIDIDPSTGVTDASAAAVCDALKLEGQAREDMMGLAKILYTAFCEKDMSMLEINPLIVMDNGHVRVLDAKVSFDGNALFRHPDIMELRDTTEEDEKEIEASKYDLAYVALDGDIGCMVNGAGLAMATMDIIKLYGAEPANFLDVGGGATTEKVTAAFKIITADPNVKGILVNIFGGIMRCDVIAEGVVTAVKDVGLQVPLVVRLEGTNVAKGKQIINESGLNVIAADDLDDAAQKIVAAVKEAN.

Residues 9 to 254 form the ATP-grasp domain; it reads KAVLKSFGAP…TTEEDEKEIE (246 aa). ATP contacts are provided by residues Lys-46, 53-55, Glu-109, Ala-112, and Glu-117; that span reads GRG. Asn-209 and Asp-223 together coordinate Mg(2+). Substrate-binding positions include Asn-274 and 331–333; that span reads GIM.

The protein belongs to the succinate/malate CoA ligase beta subunit family. Heterotetramer of two alpha and two beta subunits. The cofactor is Mg(2+).

The catalysed reaction is succinate + ATP + CoA = succinyl-CoA + ADP + phosphate. The enzyme catalyses GTP + succinate + CoA = succinyl-CoA + GDP + phosphate. It functions in the pathway carbohydrate metabolism; tricarboxylic acid cycle; succinate from succinyl-CoA (ligase route): step 1/1. Functionally, succinyl-CoA synthetase functions in the citric acid cycle (TCA), coupling the hydrolysis of succinyl-CoA to the synthesis of either ATP or GTP and thus represents the only step of substrate-level phosphorylation in the TCA. The beta subunit provides nucleotide specificity of the enzyme and binds the substrate succinate, while the binding sites for coenzyme A and phosphate are found in the alpha subunit. The protein is Succinate--CoA ligase [ADP-forming] subunit beta of Maricaulis maris (strain MCS10) (Caulobacter maris).